We begin with the raw amino-acid sequence, 691 residues long: Lipase 2 (691 aa).

The N-terminal stretch at 1–37 is a signal peptide; the sequence is MLRGQEERKYSIRKYSIGVVSVLAATMFVVSSHEAQA. A compositionally biased stretch (polar residues) spans 34–72; sequence EAQASEKTPTSNAAAQKETLNQPGEQGNAITSHQMQSGK. The segment at 34 to 267 is disordered; that stretch reads EAQASEKTPT…KPTDKNTDNK (234 aa). Residues 38–296 constitute a propeptide that is removed on maturation; it reads SEKTPTSNAA…ADAKKVRPLK (259 aa). Residues 73-82 show a composition bias toward basic and acidic residues; it reads QLDDMHKENG. Polar residues-rich tracts occupy residues 83–115, 125–172, and 186–207; these read KSGT…NDNQ, SKQS…QPSI, and PTST…AQDA. Composition is skewed to basic and acidic residues over residues 226 to 238 and 258 to 267; these read IDAK…RQSE and KPTDKNTDNK. Ser-413 acts as the Nucleophile in catalysis. Gly-580 serves as a coordination point for Ca(2+). The active-site Charge relay system is the Asp-604. Residue Asp-645 coordinates Ca(2+). Catalysis depends on His-646, which acts as the Charge relay system. Ca(2+) is bound by residues Asp-648, Asp-653, and Asp-656.

This sequence belongs to the AB hydrolase superfamily. Lipase family.

It is found in the secreted. It carries out the reaction a triacylglycerol + H2O = a diacylglycerol + a fatty acid + H(+). This Staphylococcus aureus (strain Mu50 / ATCC 700699) protein is Lipase 2 (lip2).